We begin with the raw amino-acid sequence, 342 residues long: Inactive chitinase-like protein 2 (342 aa).

The N-terminal stretch at 1–19 is a signal peptide; sequence MKEIVRALEGYGPPKDKAA. Residues 20 to 60 form the Chitin-binding type-1 domain; sequence EQCGWQAGGALCPGGLCCSQYGWCANTPEYCGSGCQSQCDG. Cystine bridges form between Cys22–Cys37, Cys31–Cys43, Cys36–Cys80, Cys84–Cys88, Cys122–Cys184, Cys196–Cys204, and Cys301–Cys333.

This sequence belongs to the glycosyl hydrolase 19 family. Chitinase class I subfamily.

Its function is as follows. Inactive chitinase-like protein that does not exhibit hydrolytic activity toward chitin. Binds strongly to chitin and possesses antifungal activity toward the fungal pathogen Altenaria alternata in plate assays. Probably involved in defense against fungal pathogens through a mechanism that only involves carbohydrate binding. This is Inactive chitinase-like protein 2 from Hevea brasiliensis (Para rubber tree).